The following is a 339-amino-acid chain: tRNA pseudouridine synthase D (339 aa).

D80 (nucleophile) is an active-site residue. The 157-residue stretch at 155–311 (GFPNYFTEQR…AKGFSWAFEL (157 aa)) folds into the TRUD domain.

The protein belongs to the pseudouridine synthase TruD family.

It carries out the reaction uridine(13) in tRNA = pseudouridine(13) in tRNA. Functionally, responsible for synthesis of pseudouridine from uracil-13 in transfer RNAs. This is tRNA pseudouridine synthase D from Haemophilus influenzae (strain PittEE).